The following is a 251-amino-acid chain: 3-deoxy-manno-octulosonate cytidylyltransferase (251 aa).

This sequence belongs to the KdsB family.

Its subcellular location is the cytoplasm. The catalysed reaction is 3-deoxy-alpha-D-manno-oct-2-ulosonate + CTP = CMP-3-deoxy-beta-D-manno-octulosonate + diphosphate. It participates in nucleotide-sugar biosynthesis; CMP-3-deoxy-D-manno-octulosonate biosynthesis; CMP-3-deoxy-D-manno-octulosonate from 3-deoxy-D-manno-octulosonate and CTP: step 1/1. The protein operates within bacterial outer membrane biogenesis; lipopolysaccharide biosynthesis. In terms of biological role, activates KDO (a required 8-carbon sugar) for incorporation into bacterial lipopolysaccharide in Gram-negative bacteria. The polypeptide is 3-deoxy-manno-octulosonate cytidylyltransferase (Alcanivorax borkumensis (strain ATCC 700651 / DSM 11573 / NCIMB 13689 / SK2)).